Consider the following 340-residue polypeptide: Fructoselysine 6-phosphate deglycase (340 aa).

2 SIS domains span residues 35–169 (IVEE…RLAP) and 201–331 (LGEL…PDER).

As to quaternary structure, homododecamer.

The enzyme catalyses N(6)-(6-phospho-D-fructosyl)-L-lysine + H2O = D-glucose 6-phosphate + L-lysine. The protein operates within carbohydrate metabolism; fructoselysine degradation; D-glucose 6-phosphate and lysine from fructoselysine: step 2/2. With respect to regulation, strongly inhibited by ZnCl(2). Its function is as follows. Catalyzes the reversible conversion of fructoselysine 6-phosphate to glucose 6-phosphate and lysine. Functions in a fructoselysine degradation pathway that allows E.coli to grow on fructoselysine or psicoselysine. In Escherichia coli (strain K12), this protein is Fructoselysine 6-phosphate deglycase.